We begin with the raw amino-acid sequence, 124 residues long: Large ribosomal subunit protein bL12 (124 aa).

The protein belongs to the bacterial ribosomal protein bL12 family. As to quaternary structure, homodimer. Part of the ribosomal stalk of the 50S ribosomal subunit. Forms a multimeric L10(L12)X complex, where L10 forms an elongated spine to which 2 to 4 L12 dimers bind in a sequential fashion. Binds GTP-bound translation factors.

Its function is as follows. Forms part of the ribosomal stalk which helps the ribosome interact with GTP-bound translation factors. Is thus essential for accurate translation. This Vesicomyosocius okutanii subsp. Calyptogena okutanii (strain HA) protein is Large ribosomal subunit protein bL12.